Consider the following 1288-residue polypeptide: MGGCFCIPRERSLTRGPGKETPSKDPTVSSECIASSEYKEKCFLPQNINPDLTLSFCVKSRSRRCVNGPLQEAARRRLWALENEDQEVRMLFKDLSARLVSIQSQRAQFLITFKTMEEIWKFSTYLNLGYVSMCLEHLLFDHKYWLNCILVEDTEIQVSVDDKHLETIYLGLLIQEGHFFCRALCSVTPPAEKEGECLTLCKNELISVKMAEAGSELEGVSLVTGQRGLVLVSALEPLPLPFHQWFLKNYPGSCGLSRKRDWTGSYQIGRGRCKALTGYEPGEKDELNFYQGESIEIIGFVIPGLQWFIGKSTSSGQVGFVPTRNIDPDSYSPMSRNSAFLSDEERCSLLALGSDKQTECSSFLHTLARTDITSVYRLSGFESIQNPPNDLSASQPEGFKEVRPGRAWEEHQAVGSRQSSSSEDSSLEEELLSATSDSYRLPEPDDLDDPELLMDLSTGQEEEAENFAPILAFLDHEGYADHFKSLYDFSFSFLTSSFYSFSEEDEFVAYLEASRKWAKKSHMTWAHARLCFLLGRLSIRKVKLSQARVYFEEAIHILNGAFEDLSLVATLYINLAAIYLKQRLRHKGSALLEKAGALLACLPDRESSAKHELDVVAYVLRQGIVVGSSPLEARACFLAIRLLLSLGRHEEVLPFAERLQLLSGHPPASEAVASVLSFLYDKKYLPHLAVASVQQHGIQSAQGMSLPIWQVHLVLQNTTKLLGFPSPGWGEVSALACPMLRQALAACEELADRSTQRALCLILSKVYLEHRSPDGAIHYLSQALVLGQLLGEQESFESSLCLAWAYLLASQAKKALDVLEPLLCSLKETESLTQRGVIYNLLGLALQGEGRVNRAAKSYLRALNRAQEVGDVHNQAVAMANLGHLSLKSWAQHPARNYLLQAVRLYCELQASKETDMELVQVFLWLAQVLVSGHQLTHGLLCYEMALLFGLRHRHLKSQLQATKSLCHFYSSVSPNPEACITYHEHWLALAQQLRDREMEGRLLESLGQLYRNLNTARSLRRSLTCIKESLRIFIDLGETDKAAEAWLGAGRLHYLMQEDELVELCLQAAIQTALKSEEPLLALKLYEEAGDVFFNGTRHRHHAVEYYRAGAVPLARRLKAVRTELRIFNKLTELQISLEGYEKALEFATLAARLSTVTGDQRQELVAFHRLATVYYSLHMYEMAEDCYLKTLSLCPPWLQSPKEALYYAKVYYRLGRLTFCQLKDAHDATEYFLLALAAAVLLGDEELQDTIRSRLDNICQSPLWHSRPSGCSSERARWLSGGGLAL.

SH3 domains lie at 176–240 and 268–331; these read EGHF…PLPL and IGRG…PDSY. A compositionally biased stretch (polar residues) spans 386 to 395; the sequence is NPPNDLSASQ. Disordered regions lie at residues 386–405 and 410–444; these read NPPNDLSASQPEGFKEVRPG and EHQAVGSRQSSSSEDSSLEEELLSATSDSYRLPEP. TPR repeat units follow at residues 528–561, 757–790, 836–869, 1001–1037, 1084–1118, 1119–1152, 1166–1199, and 1210–1244; these read ARLCFLLGRLSIRKVKLSQARVYFEEAIHILNGA, RALCLILSKVYLEHRSPDGAIHYLSQALVLGQLL, GVIYNLLGLALQGEGRVNRAAKSYLRALNRAQEV, GRLLESLGQLYRNLNTARSLRRSLTCIKESLRIFIDL, LKLYEEAGDVFFNGTRHRHHAVEYYRAGAVPLARR, LKAVRTELRIFNKLTELQISLEGYEKALEFATLA, LVAFHRLATVYYSLHMYEMAEDCYLKTLSLCPPW, and AKVYYRLGRLTFCQLKDAHDATEYFLLALAAAVLL.

In terms of tissue distribution, strongly expressed in brain and spinal cord. Expressed at equal level in spinal cord and sciatic nerve. Weakly expressed in striated muscle.

The polypeptide is SH3 domain and tetratricopeptide repeat-containing protein 2 (SH3TC2) (Homo sapiens (Human)).